Reading from the N-terminus, the 244-residue chain is DnaJ homolog subfamily C member 4 (244 aa).

The 66-residue stretch at 37-102 (NYYELLGVHP…ESRRNYDHQL (66 aa)) folds into the J domain. Positions 96–127 (RNYDHQLHSASPPKSSGSTAEPKYTQQTHSSW) are disordered. Residues 103–127 (HSASPPKSSGSTAEPKYTQQTHSSW) show a composition bias toward polar residues. A helical transmembrane segment spans residues 159–178 (VLGYCLLLMVAGMGLHYVAF). Positions 208-244 (RANRARIQQERQQRQQPRAEPSLPPESSRIMPQDTSP) are disordered.

Its subcellular location is the membrane. The protein is DnaJ homolog subfamily C member 4 (Dnajc4) of Mus musculus (Mouse).